The primary structure comprises 187 residues: MATPTFDLADLKRRMQGAVNALKHDLGSLRTGRASPTLLDPIQIEAYGAVMPMAQVATISVPEPRLLSVAVWDRGMVSAVEKAIRESDLGLNPMTEGQTIRLRIPEMSEQRRKEMVKVAHKYAEEARVAVRHVRRDGLDLLKKLEKDGAISQDDEKRQADQVQKITDQHIAEVDQTLAAKEKEIMQV.

Belongs to the RRF family.

The protein localises to the cytoplasm. Functionally, responsible for the release of ribosomes from messenger RNA at the termination of protein biosynthesis. May increase the efficiency of translation by recycling ribosomes from one round of translation to another. The polypeptide is Ribosome-recycling factor (Methylobacterium nodulans (strain LMG 21967 / CNCM I-2342 / ORS 2060)).